The primary structure comprises 648 residues: Beta-glucuronidase (648 aa).

The signal sequence occupies residues 1–19; sequence GLAMAWAVLGPLLWGCALA. N-linked (GlcNAc...) asparagine glycosylation is found at Asn170, Asn269, and Asn417. The active-site Proton donor is the Glu448. Asn628 carries an N-linked (GlcNAc...) asparagine glycan.

Belongs to the glycosyl hydrolase 2 family. As to quaternary structure, homotetramer.

It localises to the lysosome. The catalysed reaction is a beta-D-glucuronoside + H2O = D-glucuronate + an alcohol. Inhibited by L-aspartic acid. Its function is as follows. Plays an important role in the degradation of dermatan and keratan sulfates. The sequence is that of Beta-glucuronidase (GUSB) from Chlorocebus aethiops (Green monkey).